The sequence spans 276 residues: Glutathione S-transferase-like protein ustS (276 aa).

The 94-residue stretch at 16–109 (STLPGTSKSW…HLDETYPDPP (94 aa)) folds into the GST N-terminal domain.

It belongs to the GST superfamily.

It participates in mycotoxin biosynthesis. In terms of biological role, glutathione S-transferase-like protein; part of the gene cluster that mediates the biosynthesis of the secondary metabolite ustiloxin B, an antimitotic tetrapeptide. First, ustA is processed by the subtilisin-like endoprotease Kex2 that is outside the ustiloxin B gene cluster, at the C-terminal side of Arg-Lys, after transfer to Golgi apparatus through the endoplasmic reticulum (ER). Cleavage by KEX2 generates 16 peptides YAIG-I to YAIG-XVI. To process the precursor peptide further, at least two peptidases are necessary to cleave the N-terminal and C-terminal sides of the Tyr-Ala-Ile-Gly core peptide which serves as backbone for the synthesis of ustiloxin B, through cyclization and modification of the tyrosine with a non-protein coding amino acid, norvaline. One of the two peptidases must be the serine peptidase ustP; and the other pepdidase is probably ustH. Macrocyclization of the core peptide derived from ustA requires the tyrosinase ustQ, as well as the homologous oxidases ustYa and ustYb, and leads to the production of the first cyclization product N-desmethylustiloxin F. For the formation of N-desmethylustiloxin F, three oxidation steps are required, hydroxylation at the benzylic position, hydroxylation at either the aromatic ring of Tyr or beta-position of Ile, and oxidative cyclization. UstQ may catalyze the oxidation of a phenol moiety, whereas the ustYa and ustYb are most likely responsible for the remaining two-step oxidations. N-desmethylustiloxin F is then methylated by ustM to yield ustiloxin F which in turn substrate of the cytochrome P450 monooxygenase ustC which catalyzes the formation of S-deoxyustiloxin H. The flavoprotein monooxygenases ustF1 and ustF2 then participate in the modification of the side chain of S-deoxyustiloxin H, leading to the synthesis of an oxime intermediate, via ustiloxin H. Finally, carboxylative dehydration performed by the cysteine desulfurase-like protein ustD yields ustiloxin B. The chain is Glutathione S-transferase-like protein ustS from Aspergillus flavus (strain ATCC 200026 / FGSC A1120 / IAM 13836 / NRRL 3357 / JCM 12722 / SRRC 167).